The primary structure comprises 635 residues: Threonine--tRNA ligase (635 aa).

Positions 1–61 (MIAITLPDGS…DRDAELAIVT (61 aa)) constitute a TGS domain. The catalytic stretch occupies residues 242–533 (DHRKLGKTLD…LLENHAGALP (292 aa)). Residues cysteine 333, histidine 384, and histidine 510 each contribute to the Zn(2+) site.

It belongs to the class-II aminoacyl-tRNA synthetase family. Homodimer. Zn(2+) serves as cofactor.

It localises to the cytoplasm. It catalyses the reaction tRNA(Thr) + L-threonine + ATP = L-threonyl-tRNA(Thr) + AMP + diphosphate + H(+). Functionally, catalyzes the attachment of threonine to tRNA(Thr) in a two-step reaction: L-threonine is first activated by ATP to form Thr-AMP and then transferred to the acceptor end of tRNA(Thr). Also edits incorrectly charged L-seryl-tRNA(Thr). This is Threonine--tRNA ligase from Cupriavidus necator (strain ATCC 17699 / DSM 428 / KCTC 22496 / NCIMB 10442 / H16 / Stanier 337) (Ralstonia eutropha).